We begin with the raw amino-acid sequence, 197 residues long: dTTP/UTP pyrophosphatase (197 aa).

Catalysis depends on D70, which acts as the Proton acceptor.

Belongs to the Maf family. YhdE subfamily. A divalent metal cation serves as cofactor.

It localises to the cytoplasm. The catalysed reaction is dTTP + H2O = dTMP + diphosphate + H(+). It catalyses the reaction UTP + H2O = UMP + diphosphate + H(+). Functionally, nucleoside triphosphate pyrophosphatase that hydrolyzes dTTP and UTP. May have a dual role in cell division arrest and in preventing the incorporation of modified nucleotides into cellular nucleic acids. The chain is dTTP/UTP pyrophosphatase (yceF) from Shigella dysenteriae serotype 1 (strain Sd197).